Reading from the N-terminus, the 192-residue chain is ATP-dependent Clp protease proteolytic subunit 1 (192 aa).

The Nucleophile role is filled by S92. H117 is a catalytic residue.

Belongs to the peptidase S14 family. As to quaternary structure, fourteen ClpP subunits assemble into 2 heptameric rings which stack back to back to give a disk-like structure with a central cavity, resembling the structure of eukaryotic proteasomes.

The protein localises to the cytoplasm. The enzyme catalyses Hydrolysis of proteins to small peptides in the presence of ATP and magnesium. alpha-casein is the usual test substrate. In the absence of ATP, only oligopeptides shorter than five residues are hydrolyzed (such as succinyl-Leu-Tyr-|-NHMec, and Leu-Tyr-Leu-|-Tyr-Trp, in which cleavage of the -Tyr-|-Leu- and -Tyr-|-Trp bonds also occurs).. Cleaves peptides in various proteins in a process that requires ATP hydrolysis. Has a chymotrypsin-like activity. Plays a major role in the degradation of misfolded proteins. The protein is ATP-dependent Clp protease proteolytic subunit 1 of Chlamydia trachomatis serovar D (strain ATCC VR-885 / DSM 19411 / UW-3/Cx).